The chain runs to 444 residues: Homocysteine/cysteine synthase (444 aa).

N6-(pyridoxal phosphate)lysine is present on Lys-208.

Belongs to the trans-sulfuration enzymes family. Homotetramer. Requires pyridoxal 5'-phosphate as cofactor.

The protein resides in the cytoplasm. It catalyses the reaction O-acetyl-L-homoserine + methanethiol = L-methionine + acetate + H(+). The catalysed reaction is O-acetyl-L-homoserine + hydrogen sulfide = L-homocysteine + acetate. The enzyme catalyses O-acetyl-L-serine + hydrogen sulfide = L-cysteine + acetate. It functions in the pathway amino-acid biosynthesis; L-methionine biosynthesis via de novo pathway; L-homocysteine from O-acetyl-L-homoserine. It participates in amino-acid biosynthesis; L-cysteine biosynthesis; L-cysteine from L-serine: step 2/2. In terms of biological role, catalyzes the conversion of O-acetyl-L-homoserine (OAH) into homocysteine in the methionine biosynthesis pathway. Also catalyzes the conversion of O-acetylserine (OAS) into cysteine, the last step in the cysteine biosynthesis pathway. The sequence is that of Homocysteine/cysteine synthase (MET17) from Kluyveromyces lactis (strain ATCC 8585 / CBS 2359 / DSM 70799 / NBRC 1267 / NRRL Y-1140 / WM37) (Yeast).